Here is a 219-residue protein sequence, read N- to C-terminus: Transmembrane emp24 domain-containing protein 10 (219 aa).

The signal sequence occupies residues 1 to 31; that stretch reads MSGSSGPLSWPGPRPCALLFLLLLGPSSVLA. Residues 1–142 are required for interaction with STX17; it reads MSGSSGPLSW…KNYEEIAKVE (142 aa). At 32–185 the chain is on the lumenal side; it reads ISFHLPVNSR…RDTNESTNTR (154 aa). A GOLD domain is found at 41-193; the sequence is RKCLREEIHK…TRVLYFSIFS (153 aa). A required for TMED10 and TMED2 cis-Golgi network localization region spans residues 147-178; that stretch reads LEVELRRLEDLSESIVNDFAYMKKREEEMRDT. 2 positions are modified to dimethylated arginine: arginine 171 and arginine 176. Residue asparagine 179 is glycosylated (N-linked (GlcNAc...) asparagine). Residues 186 to 206 form a helical membrane-spanning segment; the sequence is VLYFSIFSMLCLIGLATWQVF. The segment at 204–219 is interaction with COPG1; the sequence is QVFYLRRFFKAKKLIE. Over 207–219 the chain is Cytoplasmic; that stretch reads YLRRFFKAKKLIE. Positions 207-219 are interaction with ARF1 and IL1B; the sequence is YLRRFFKAKKLIE. The COPII vesicle coat-binding signature appears at 211–212; the sequence is FF. Positions 211 to 219 match the COPI vesicle coat-binding motif; sequence FFKAKKLIE.

This sequence belongs to the EMP24/GP25L family. As to quaternary structure, predominantly dimeric and to a lesser extent monomeric in the ER. Monomer and dimer in ERGIC and cis-Golgi network. Forms homooligomer (via GOLD domain); the assembly is promoted by direct binding with leaderless cargos and may form a protein channel that facilitates cargo entry into the ERGIC. Forms heterooligomeric complexes with other members of the p24 family such as TMED2, TMED7 and TMED9. Interacts (via GOLD domain) with TMED2 (via GOLD domain); the complex is required for export of TMED10 from the ER to the cis-Golgi network; the complex is proposed to be involved in cis-Golgi network dynamics and / or biogenesis. Associates with the COPI vesicle coat subunits (coatomer). Tetramerization of the cytoplasmic domain at the Golgi membrane in vitro; the complex is proposed to interact with COPI coatomer and induce budding of the vesicles. Interacts with COPG1; the interaction involves TMED10 homodimer. Interacts with ARF1 (GDP-bound); the interaction probably involves a TMED10 oligomer. Interacts with SEC23A, SEC24B, SEC24C and SEC24D components of the coat protein complex II/COPII, indicative of an association of TMED10 with the COPII vesicle coat. Interacts with CD59. Interacts with MPPE1/PGAP5; the complex might recruit and sort GPI-anchored proteins to the ER-exit site, or the interaction might lead to recycling of PGAP5 between the ER and the Golgi. Interacts with F2LR1/PAR2. Interacts with KDELR2/ERD2; the interaction is disrupted by KDELR2 ligand. Found in a complex composed at least of SURF4, TMED2 and TMED10. Associates with the presenilin-dependent gamma-secretase complex. Interacts with STX17; the interaction is direct. Interacts with IL-1; the interaction is direct. Interacts with RAB21 (active GTP-bound form); the interaction is indirect and regulates TMED10 abundance and localization at the Golgi.

The protein resides in the endoplasmic reticulum membrane. The protein localises to the endoplasmic reticulum-Golgi intermediate compartment membrane. It is found in the golgi apparatus membrane. Its subcellular location is the golgi apparatus. It localises to the cis-Golgi network membrane. The protein resides in the trans-Golgi network membrane. The protein localises to the cytoplasmic vesicle. It is found in the secretory vesicle membrane. Its subcellular location is the cell membrane. It localises to the melanosome. In terms of biological role, cargo receptor involved in protein vesicular trafficking and quality control in the endoplasmic reticulum (ER) and Golgi. The p24 protein family is a group of transmembrane proteins that bind coat protein complex I/COPI and coat protein complex II/COPII involved in vesicular trafficking between the membranes. Acts at the lumenal side for incorporation of secretory cargo molecules into transport vesicles and involved in vesicle coat formation at the cytoplasmic side. Mainly functions in the early secretory pathway and cycles between the ER, ER-Golgi intermediate compartment (ERGIC) and Golgi, mediating cargo transport through COPI and COPII-coated vesicles. In COPII vesicle-mediated anterograde transport, involved in the transport of GPI-anchored proteins by acting together with TMED2 as their cargo receptor; the function specifically implies SEC24C and SEC24D of the COPII vesicle coat and lipid raft-like microdomains of the ER. Recognizes GPI anchors structural remodeled in the ER by the GPI inositol-deacylase/PGAP1 and the metallophosphoesterase MPPE1/PGAP5. In COPI vesicle-mediated retrograde transport, involved in the biogenesis of COPI vesicles and vesicle coat recruitment. Involved in trafficking of amyloid beta A4 protein and soluble APP-beta release (independent from the modulation of gamma-secretase activity). Involved in the KDELR2-mediated retrograde transport of the toxin A subunit (CTX-A-K63)together with COPI and the COOH terminus of KDELR2. On Golgi membranes, acts as a primary receptor for ARF1-GDP, a GTP-binding protein involved in COPI-vesicle formation. Increases coatomer-dependent GTPase-activating activity of ARFGAP2 which mediates the hydrolysis of ARF1-bound GTP and therefore modulates protein trafficking from the Golgi apparatus. Involved in the exocytic trafficking of G protein-coupled receptors F2LR1/PAR2 (trypsin and tryspin-like enzyme receptor), OPRM1 (opioid receptor) and P2RY4 (UTD and UDP receptor) from the Golgi to the plasma membrane, thus contributing to receptor resensitization. In addition to its cargo receptor activity, may also act as a protein channel after oligomerization, facilitating the post-translational entry of leaderless cytoplasmic cargo into the ERGIC. Involved in the translocation into ERGIC, the vesicle entry and the secretion of leaderless cargos (lacking the secretion signal sequence), including the mature form of interleukin 1/IL-1 family members, the alpha-crystallin B chain HSPB5, the carbohydrate-binding proteins galectin-1/LGALS1 and galectin-3/LGALS3, the microtubule-associated protein Tau/MAPT, and the annexin A1/ANXA1; the translocation process is dependent on cargo protein unfolding and enhanced by chaperones HSP90AB1 and HSP90B1/GRP9. Could also associates with the presenilin-dependent gamma-secretase complex in order to regulate gamma-cleavages of the amyloid beta A4 protein to yield amyloid-beta 40/Abeta40. The polypeptide is Transmembrane emp24 domain-containing protein 10 (TMED10) (Mesocricetus auratus (Golden hamster)).